Reading from the N-terminus, the 458-residue chain is Fumarate hydratase class II 2 (458 aa).

Substrate-binding positions include S98–T100, N123–D126, S133–N135, and T181. Catalysis depends on H182, which acts as the Proton donor/acceptor. Residue S312 is part of the active site. Substrate is bound by residues S313 and K318–N320.

This sequence belongs to the class-II fumarase/aspartase family. Fumarase subfamily. As to quaternary structure, homotetramer.

It localises to the cytoplasm. It catalyses the reaction (S)-malate = fumarate + H2O. It participates in carbohydrate metabolism; tricarboxylic acid cycle; (S)-malate from fumarate: step 1/1. Involved in the TCA cycle. Catalyzes the stereospecific interconversion of fumarate to L-malate. The protein is Fumarate hydratase class II 2 of Pseudomonas aeruginosa (strain ATCC 15692 / DSM 22644 / CIP 104116 / JCM 14847 / LMG 12228 / 1C / PRS 101 / PAO1).